The sequence spans 490 residues: GTPase Der (490 aa).

2 consecutive EngA-type G domains span residues 3 to 166 (PVVA…MEDL) and 203 to 376 (IKLA…DSST). GTP is bound by residues 9–16 (GRPNVGKS), 56–60 (DTGGI), 118–121 (NKTD), 209–216 (GRPNVGKS), 256–260 (DTAGV), and 321–324 (NKWD). Positions 377–461 (RRVGTSMLTR…PIRIQFKEGE (85 aa)) constitute a KH-like domain.

Belongs to the TRAFAC class TrmE-Era-EngA-EngB-Septin-like GTPase superfamily. EngA (Der) GTPase family. Associates with the 50S ribosomal subunit.

Its function is as follows. GTPase that plays an essential role in the late steps of ribosome biogenesis. The sequence is that of GTPase Der from Shigella flexneri serotype 5b (strain 8401).